A 201-amino-acid chain; its full sequence is MELVLKDAQSALQVSETTFGREFNEALVHQVVVAYAAGARQGTRAQKTRSEVSGGGKKPWRQKGTGRARAGTIRSPIWRGGGVTFAAKPQDHSQKVNRKMYRGAIQSILSELVRQDRLVVVEKFGVDAPKTKELLTKLQALDLKDVLIVTPEVEENLFLAARNLYKVDVRDVTGIDPVSLIAFDKVLMTADAVKQIEEMLA.

Residues 43–66 (TRAQKTRSEVSGGGKKPWRQKGTG) form a disordered region.

Belongs to the universal ribosomal protein uL4 family. Part of the 50S ribosomal subunit.

Functionally, one of the primary rRNA binding proteins, this protein initially binds near the 5'-end of the 23S rRNA. It is important during the early stages of 50S assembly. It makes multiple contacts with different domains of the 23S rRNA in the assembled 50S subunit and ribosome. Its function is as follows. Forms part of the polypeptide exit tunnel. The sequence is that of Large ribosomal subunit protein uL4 from Tolumonas auensis (strain DSM 9187 / NBRC 110442 / TA 4).